The primary structure comprises 230 residues: 7-cyano-7-deazaguanine synthase (230 aa).

8–18 (LSGGMDSAVVT) contacts ATP. Positions 186, 196, 199, and 202 each coordinate Zn(2+).

The protein belongs to the QueC family. The cofactor is Zn(2+).

The enzyme catalyses 7-carboxy-7-deazaguanine + NH4(+) + ATP = 7-cyano-7-deazaguanine + ADP + phosphate + H2O + H(+). It participates in purine metabolism; 7-cyano-7-deazaguanine biosynthesis. Catalyzes the ATP-dependent conversion of 7-carboxy-7-deazaguanine (CDG) to 7-cyano-7-deazaguanine (preQ(0)). In Xylella fastidiosa (strain M23), this protein is 7-cyano-7-deazaguanine synthase.